The chain runs to 282 residues: Pantothenate synthetase (282 aa).

30–37 (MGFLHDGH) contacts ATP. Histidine 37 acts as the Proton donor in catalysis. Position 60 (glutamine 60) interacts with (R)-pantoate. Glutamine 60 is a beta-alanine binding site. 146-149 (GQKD) lines the ATP pocket. Glutamine 152 provides a ligand contact to (R)-pantoate. Residues isoleucine 175 and 183-186 (KSSR) each bind ATP.

The protein belongs to the pantothenate synthetase family. In terms of assembly, homodimer.

The protein resides in the cytoplasm. The enzyme catalyses (R)-pantoate + beta-alanine + ATP = (R)-pantothenate + AMP + diphosphate + H(+). It participates in cofactor biosynthesis; (R)-pantothenate biosynthesis; (R)-pantothenate from (R)-pantoate and beta-alanine: step 1/1. Catalyzes the condensation of pantoate with beta-alanine in an ATP-dependent reaction via a pantoyl-adenylate intermediate. This is Pantothenate synthetase from Campylobacter jejuni subsp. jejuni serotype O:23/36 (strain 81-176).